The primary structure comprises 513 residues: Alanine--glyoxylate aminotransferase 2, mitochondrial (513 aa).

The transit peptide at 1 to 40 directs the protein to the mitochondrion; sequence MSLAWRNLQKPFYLETSLRILQMRPSLSLGASRIAVPKLT. N6-acetyllysine is present on K56. K70 is subject to N6-acetyllysine; alternate. K70 is subject to N6-succinyllysine; alternate. K83 carries the N6-acetyllysine modification. K261 bears the N6-acetyllysine; alternate mark. K261 bears the N6-succinyllysine; alternate mark. K303 bears the N6-succinyllysine mark. Position 349 is an N6-(pyridoxal phosphate)lysine (K349). 2 positions are modified to N6-acetyllysine; alternate: K416 and K419. An N6-succinyllysine; alternate mark is found at K416 and K419. N6-acetyllysine is present on K453.

It belongs to the class-III pyridoxal-phosphate-dependent aminotransferase family. As to quaternary structure, homotetramer. The cofactor is pyridoxal 5'-phosphate. In terms of tissue distribution, expressed in the liver and kidney.

The protein localises to the mitochondrion. It catalyses the reaction glyoxylate + L-alanine = glycine + pyruvate. The catalysed reaction is (R)-3-amino-2-methylpropanoate + pyruvate = 2-methyl-3-oxopropanoate + L-alanine. The enzyme catalyses 3-oxopropanoate + L-alanine = beta-alanine + pyruvate. It carries out the reaction 2-oxobutanoate + L-alanine = (2S)-2-aminobutanoate + pyruvate. It catalyses the reaction N(omega),N(omega)-dimethyl-L-arginine + pyruvate = 5-(3,3-dimethylguanidino)-2-oxopentanoate + L-alanine. The catalysed reaction is N(omega),N('omega)-dimethyl-L-arginine + pyruvate = 5-(3,3'-dimethylguanidino)-2-oxopentanoate + L-alanine. The enzyme catalyses N(omega),N(omega)-dimethyl-L-arginine + glyoxylate = 5-(3,3-dimethylguanidino)-2-oxopentanoate + glycine. It carries out the reaction N(omega),N('omega)-dimethyl-L-arginine + glyoxylate = 5-(3,3'-dimethylguanidino)-2-oxopentanoate + glycine. It catalyses the reaction N(omega)-methyl-L-arginine + pyruvate = 5-(3-methylguanidino)-2-oxopentanoate + L-alanine. The catalysed reaction is N(omega)-methyl-L-arginine + glyoxylate = 5-(3-methylguanidino)-2-oxopentanoate + glycine. The enzyme catalyses L-ornithine + pyruvate = 5-amino-2-oxopentanoate + L-alanine. It carries out the reaction L-ornithine + glyoxylate = 5-amino-2-oxopentanoate + glycine. It catalyses the reaction (2S)-2-aminobutanoate + glyoxylate = 2-oxobutanoate + glycine. The catalysed reaction is N(omega),N(omega)-dimethyl-L-arginine + oxaloacetate = 5-(3,3-dimethylguanidino)-2-oxopentanoate + L-aspartate. The enzyme catalyses oxaloacetate + L-alanine = L-aspartate + pyruvate. It carries out the reaction N(omega),N(omega)-dimethyl-L-arginine + 2-oxobutanoate = 5-(3,3-dimethylguanidino)-2-oxopentanoate + (2S)-2-aminobutanoate. It catalyses the reaction 2-oxopentanoate + N(omega),N(omega)-dimethyl-L-arginine = 5-(3,3-dimethylguanidino)-2-oxopentanoate + L-2-aminopentanoate. The catalysed reaction is 2-oxohexanoate + N(omega),N(omega)-dimethyl-L-arginine = L-2-aminohexanoate + 5-(3,3-dimethylguanidino)-2-oxopentanoate. With respect to regulation, (R)-3-amino-2-methylpropionate--pyruvate transaminase and beta-alanine-pyruvate aminotransferase are inhibited by aminooxyacetic acid. Its function is as follows. Multifunctional aminotransferase with a broad substrate specificity. Catalyzes the conversion of glyoxylate to glycine using alanine as the amino donor. Catalyzes metabolism of not L- but the D-isomer of D-beta-aminoisobutyric acid to generate 2-methyl-3-oxopropanoate and alanine. Catalyzes the transfer of the amino group from beta-alanine to pyruvate to yield L-alanine and 3-oxopropanoate. Can metabolize NG-monomethyl-L-arginine (NMMA), asymmetric NG,NG-dimethyl-L-arginine (ADMA) and symmetric NG,N'G-dimethyl-L-arginine (SDMA). ADMA is a potent inhibitor of nitric-oxide (NO) synthase, and this activity provides mechanism through which the kidney regulates blood pressure. This Mus musculus (Mouse) protein is Alanine--glyoxylate aminotransferase 2, mitochondrial (Agxt2).